The sequence spans 101 residues: Small ribosomal subunit protein uS14 (101 aa).

The protein belongs to the universal ribosomal protein uS14 family. Part of the 30S ribosomal subunit. Contacts proteins S3 and S10.

In terms of biological role, binds 16S rRNA, required for the assembly of 30S particles and may also be responsible for determining the conformation of the 16S rRNA at the A site. This is Small ribosomal subunit protein uS14 from Aliivibrio salmonicida (strain LFI1238) (Vibrio salmonicida (strain LFI1238)).